We begin with the raw amino-acid sequence, 269 residues long: MNKKTRIAITGPIGRMGRMLIKEIQNNKQSHLTVAVVQKKHQLIGQDIGRIIGIGEIGVLISDELNIKKNDFDVLIDFTRPAGTLEYLKYCNKFKKNIVIGTTGFSKEEIDIIKSYSQKIAIIIASNFSIGINLLFQLIKKTTQIIGKDSDINILEYHHRNKIDAPSGTALEIGEVISKVMNWNLNQDSIYYQKGITGIRDAKKIGFSIVRAGNIVGKHTVMFSSCDEEIKITHTASNRMSFARGAIQSALWIHKKNTGLFDMTDVLSL.

11–16 is a binding site for NAD(+); that stretch reads GPIGRM. An NADP(+)-binding site is contributed by lysine 39. NAD(+) is bound by residues 101–103 and 125–128; these read GTT and ASNF. The active-site Proton donor/acceptor is the histidine 158. Residue histidine 159 participates in (S)-2,3,4,5-tetrahydrodipicolinate binding. Catalysis depends on lysine 162, which acts as the Proton donor. A (S)-2,3,4,5-tetrahydrodipicolinate-binding site is contributed by 168-169; sequence GT.

Belongs to the DapB family. In terms of assembly, homotetramer.

The protein resides in the cytoplasm. It carries out the reaction (S)-2,3,4,5-tetrahydrodipicolinate + NAD(+) + H2O = (2S,4S)-4-hydroxy-2,3,4,5-tetrahydrodipicolinate + NADH + H(+). It catalyses the reaction (S)-2,3,4,5-tetrahydrodipicolinate + NADP(+) + H2O = (2S,4S)-4-hydroxy-2,3,4,5-tetrahydrodipicolinate + NADPH + H(+). The protein operates within amino-acid biosynthesis; L-lysine biosynthesis via DAP pathway; (S)-tetrahydrodipicolinate from L-aspartate: step 4/4. Its function is as follows. Catalyzes the conversion of 4-hydroxy-tetrahydrodipicolinate (HTPA) to tetrahydrodipicolinate. The polypeptide is 4-hydroxy-tetrahydrodipicolinate reductase (Buchnera aphidicola subsp. Acyrthosiphon pisum (strain Tuc7)).